The following is a 406-amino-acid chain: MPVYQYKARDRQGRLVEATIEAEDLRTAARLLRDRGLFVAEIKEPGKGLQAEVRIPALERGPGLKDLAIFSRQLATMLGAGLTLLQALAILERQTENRKFREILKQVRTDVEGGMAFSEALSKHKIFSRLYVNLVRAGETSGGLDLILDRLASFLEKELELRGKIRSAMTYPVIVFVFAVGVAYFLLTGIVPQFAQILTDLGSELPLLTRFLIAVSDLLRAATLPLLLLAVALFFAYRWYYGTPQGRRVIDRLKLRLPVFGNLNRKTAVARFSRTLALLLSSGVNIVEALDITKGTAGNSVVEEIVEAAKLKIQQGDPLNLTLAQHPFVFPPMVSSMVAIGEETGALDTMLSKVADFYEREVDEAVASLTAAIEPLMIIFLGVIVGMIVAGMFLPLFKIIGTLSVQ.

Transmembrane regions (helical) follow at residues 69 to 91 (IFSR…LAIL), 171 to 191 (YPVI…TGIV), 211 to 231 (FLIA…LLAV), and 377 to 397 (MIIF…LPLF).

It belongs to the GSP F family. Homotetramer. Interacts with PilB.

It is found in the cell inner membrane. Essential inner membrane component of the type IV pilus (T4P) that plays a role in surface and host cell adhesion, colonization, biofilm maturation, virulence, and twitching, a form of surface-associated motility facilitated by cycles of extension, adhesion, and retraction of T4P fibers. Controls both pilus assembly and disassembly and plays an important role in PilB localization to the complex and ATPase activity. The sequence is that of Type IV pilus assembly protein PilC from Thermus thermophilus (strain ATCC 27634 / DSM 579 / HB8).